The chain runs to 926 residues: UvrABC system protein A (926 aa).

31 to 38 (GPSGSGKS) provides a ligand contact to ATP. The C4-type zinc-finger motif lies at 251-278 (CPEHGFSIPELSARLFSFNSPYGACPSC). ABC transporter domains follow at residues 308 to 568 (SGYF…PSSL) and 588 to 916 (PSGK…KYLR). ATP is bound at residue 620-627 (GVSGSGKS). The C4-type zinc finger occupies 719-745 (CEACQGEGVIKVEMHFLPPVYVTCEVC).

Belongs to the ABC transporter superfamily. UvrA family. In terms of assembly, forms a heterotetramer with UvrB during the search for lesions.

The protein localises to the cytoplasm. Its function is as follows. The UvrABC repair system catalyzes the recognition and processing of DNA lesions. UvrA is an ATPase and a DNA-binding protein. A damage recognition complex composed of 2 UvrA and 2 UvrB subunits scans DNA for abnormalities. When the presence of a lesion has been verified by UvrB, the UvrA molecules dissociate. This chain is UvrABC system protein A, found in Aquifex aeolicus (strain VF5).